The chain runs to 163 residues: MHTRAIYPGTFDPITNGHVDLIERAAKLFKHVTIGIAANPSKQPRFTLEERVELVNRVTAHLDNVEVVGFSGLLVDFAKEQKASVLVRGLRAVSDFEYEFQLANMNRRLSPDLESVFLTPAEENSFISSTLVKEVALHGGDVSQFVHPEVTAALAAKLKLVKP.

Thr-10 contributes to the substrate binding site. Residues 10–11 (TF) and His-18 contribute to the ATP site. Lys-42, Leu-74, and Arg-88 together coordinate substrate. ATP contacts are provided by residues 89–91 (GLR), Glu-99, and 124–130 (NSFISST).

Belongs to the bacterial CoaD family. In terms of assembly, homohexamer. Mg(2+) is required as a cofactor.

It is found in the cytoplasm. It carries out the reaction (R)-4'-phosphopantetheine + ATP + H(+) = 3'-dephospho-CoA + diphosphate. The protein operates within cofactor biosynthesis; coenzyme A biosynthesis; CoA from (R)-pantothenate: step 4/5. Reversibly transfers an adenylyl group from ATP to 4'-phosphopantetheine, yielding dephospho-CoA (dPCoA) and pyrophosphate. The polypeptide is Phosphopantetheine adenylyltransferase (Shewanella sp. (strain W3-18-1)).